Reading from the N-terminus, the 297-residue chain is Rhomboid-type serine protease 2 (297 aa).

The next 6 helical transmembrane spans lie at 14 to 34 (IQHP…IFLL), 60 to 80 (ISFY…LVAL), 98 to 118 (IVLN…SIGF), 120 to 140 (PDEA…YWAI), 155 to 175 (LVVP…IVIP), and 179 to 199 (FIGH…YLDV). The active-site Nucleophile is the Ser-128. The active site involves His-182. Positions 268–297 (DLEAGTRSRGNSSVDPTTSFPGTGQTLGTQ) are disordered. Residues 275–297 (SRGNSSVDPTTSFPGTGQTLGTQ) are compositionally biased toward polar residues.

It belongs to the peptidase S54 family.

It localises to the golgi apparatus membrane. The protein localises to the golgi apparatus. Its subcellular location is the cis-Golgi network membrane. The enzyme catalyses Cleaves type-1 transmembrane domains using a catalytic dyad composed of serine and histidine that are contributed by different transmembrane domains.. Probable rhomboid-type serine protease that catalyzes intramembrane proteolysis. The protein is Rhomboid-type serine protease 2 (RBD2) of Yarrowia lipolytica (strain CLIB 122 / E 150) (Yeast).